We begin with the raw amino-acid sequence, 546 residues long: Flavin-dependent oxygenase ucdF (546 aa).

The 183-residue stretch at 81 to 263 (QGRIPYYAVM…VNTTIRTFPD (183 aa)) folds into the FAD-binding PCMH-type domain.

Belongs to the oxygen-dependent FAD-linked oxidoreductase family.

Functionally, nonribosomal peptide synthetase that mediates the biosynthesis of usterphenyllins and uscandidusins, p-terphenyl derivatives. The function of ucdF within the pathway still remains to be determined. UcdE further prenylates position C-14 of ring C of usterphenyllin B to form usterphenyllin A. The pathway begin with the biosynthesis of 4-hydroxyphenylpyruvate (HPPA) from L-tyrosine, possibly by the aminotransferase ucdG. The nonribosomal peptide synthetase ucdA then condenses two HPPA units to produce atromentin. The key step in this pathway is the reduction and dehydration of atromentin to form a terphenyl triol intermediate, performed by the NAD-dependent dehydrogenase ucdB. Further O-methylation by the methyltransferase ucdC forms terphenyllin carrying two methoxy moieties at C-9 and C-12, and subsequent dihydroxylation at C-3 of ring A and C-15 of ring C by the flavin-dependent oxygenase ucdD leads to 3,15-dihydroxyterphenyllin. Prenylation by ucdE at position C-5 of ring A forms usterphenyllin B, and is followed by a second prenylation at position C-14 of ring C to form usterphenyllin A. The following furan ring formation that leads to uscandidusins A and B was proven to be an unexpected spontaneous non-enzymatic reaction. The protein is Flavin-dependent oxygenase ucdF of Aspergillus ustus.